An 814-amino-acid polypeptide reads, in one-letter code: Coiled-coil and C2 domain-containing protein 1-like (814 aa).

Residues 1 to 11 show a composition bias toward basic and acidic residues; the sequence is MFAKRKPEPAK. Disordered regions lie at residues 1 to 136 and 157 to 263; these read MFAK…TFLP and EANA…RSRQ. Acidic residues predominate over residues 25–47; it reads IPDDFDPTSGYGDDDGGDSDLEA. Residues 73-85 are compositionally biased toward basic and acidic residues; it reads DLDKMIADSLRDV. Acidic residues-rich tracts occupy residues 86–100 and 110–130; these read SDDD…DSDL and LEEE…EEEP. Residues 143-201 are DM14 1; it reads LGIIKQRLEIYKQAEANAKASGDSGKARRFGRGLKTLQDLHKQAAAGKTINVDDIPPEV. Positions 205–230 are enriched in low complexity; the sequence is PAGDPSPAADESPAPSTPVSQPTRVA. Positions 231–254 are enriched in pro residues; it reads PAPPTPTSPPAATPPPAPATPPNP. 2 DM14 regions span residues 256-314 and 358-416; these read VAQM…PPPP and LEAL…PVPP. Positions 351–378 form a coiled coil; it reads AAAAESMLEALQRRLEKYKSVEAAAKAE. The segment covering 414 to 425 has biased composition (pro residues); the sequence is VPPGFGPLPSTE. Positions 414–486 are disordered; the sequence is VPPGFGPLPS…LTTRVTGNHQ (73 aa). A compositionally biased stretch (low complexity) spans 426–462; it reads PAPAATPSLPTSPTSPPATASTSAGGTPSGSSATTPT. Positions 475–486 are enriched in polar residues; sequence TELTTRVTGNHQ. The segment at 495–553 is DM14 4; it reads MKLLLERQKEFKVAAIEAKKAGEIDQAKEYLKIYKGFDSLLNAASSGLPVDLSTLPVPP. A C2 domain is found at 633 to 772; it reads RKGQPLPKFH…ETKCDIHDTY (140 aa).

This sequence belongs to the CC2D1 family. Interacts (via DM14 domains 1 and 3) with shrb; the interaction is direct and blocks access to the surface involved in shrb polymerization. This interaction may be required for the ESCRT-III complex role in multivesicular body formation.

Its subcellular location is the cytoplasm. The protein resides in the cytosol. The protein localises to the apicolateral cell membrane. It is found in the cell cortex. It localises to the endosome. Phosphatidyl inositol monophosphate binding protein involved in endosomal protein sorting through regulation of the endosomal sorting required for transport (ESCRT) pathway. Required for full activity of the ESCRT-III complex core component shrb/shrub, probably by preventing its inappropriate polymerisation. Required, but not essential, for the efficient generation of intraluminal vesicles (ILVs) in multivesicular bodies (MVBs). Involved in a late stage of the endosomal pathway targeting transmembrane proteins of the plasma membrane for lysosomal degradation. Plays a critical role in regulation of multiple signal transduction pathways, including the Notch and BMP/decapentaplegic (dpp) signaling pathways, through targeting of membrane bound receptors to multivesicular bodies, isolating them from the cytoplasm and targeting them for lysosomal degradation. Involved in targeting N/Notch for endosomal degradation, negatively regulating the Notch signaling pathway. Regulates Notch signaling in imaginal disk cells and follicle cells during oogenesis and multiple developmental processes, including development of wings, veins, legs, eyes and bristles. Restricts the activity of Notch to the dorsoventral (D/V) boundary of the wing imaginal disk. In external sensory organ development regulates Notch signaling during asymmetric cell division and differentiation of sensory organ precursor cells. May be involved in regulation of apoptosis and cell growth independent of Notch signaling. Involved in targeting tkv for endosomal degradation, negatively regulating the BMP/decapentaplegic (dpp) signaling pathway. Regulates the BMP/dpp signaling pathway in follicle cells during oogenesis, but not in imaginal disk cells during wing development. May be involved in differentiation or morphogenesis of peripodial epithelial cells in the developing imaginal disk. Involved in abscission of germline cells during oogenesis. The chain is Coiled-coil and C2 domain-containing protein 1-like from Drosophila pseudoobscura pseudoobscura (Fruit fly).